The chain runs to 116 residues: M-zodatoxin-Lt6a/b (116 aa).

The N-terminal stretch at 1 to 22 (MKYFVVALTLAVAFVCIEECKT) is a signal peptide. 2 consecutive propeptides follow at residues 23-44 (VEIG…EEAR) and 80-83 (EEAR). 2 consecutive short sequence motifs (processing quadruplet motif) follow at residues 41-44 (EEAR) and 80-83 (EEAR). Pyrrolidone carboxylic acid is present on Gln84.

This sequence belongs to the cationic peptide 03 (latarcin) family. 06 subfamily. In terms of processing, cleavage of the propeptide depends on the processing quadruplet motif (XXXR, with at least one of X being E). In terms of tissue distribution, expressed by the venom gland.

It localises to the secreted. In terms of biological role, does not have antimicrobial activity against neither Gram-positive bacteria (A.globiformis VKM Ac-1112 (MIC&gt;70 uM), and B.subtilis VKM B-501 (MIC&gt;70 uM)), nor Gram-negative bacteria (E.coli DH5-alpha (MIC&gt;70 uM), E.coli MH1 (MIC&gt;70 uM), and P.aeruginosa PAO1 (MIC&gt;70 uM)), nor yeasts (P.pastoris GS115 (MIC&gt;70 uM), and S.cerevisiae Y190 (MIC&gt;70 uM)). Does not have hemolytic activity against rabbit erythrocytes. However, it causes some conductance changes in planar bilayer membranes, without membrane rupture, suggesting a cytolytic function on other biological targets. It causes paralysis, but is not lethal when injected into insect (M.domestica) larvae. This Lachesana tarabaevi (Spider) protein is M-zodatoxin-Lt6a/b.